A 171-amino-acid polypeptide reads, in one-letter code: 2-C-methyl-D-erythritol 2,4-cyclodiphosphate synthase (171 aa).

A divalent metal cation is bound by residues D8 and H10. Residues 8-10 and 34-35 contribute to the 4-CDP-2-C-methyl-D-erythritol 2-phosphate site; these read DVH and HS. H42 provides a ligand contact to a divalent metal cation. Residues 56–58, 61–65, 132–135, F139, and R142 contribute to the 4-CDP-2-C-methyl-D-erythritol 2-phosphate site; these read DIG, FPDTD, and TTTE.

The protein belongs to the IspF family. In terms of assembly, homotrimer. A divalent metal cation is required as a cofactor.

It carries out the reaction 4-CDP-2-C-methyl-D-erythritol 2-phosphate = 2-C-methyl-D-erythritol 2,4-cyclic diphosphate + CMP. Its pathway is isoprenoid biosynthesis; isopentenyl diphosphate biosynthesis via DXP pathway; isopentenyl diphosphate from 1-deoxy-D-xylulose 5-phosphate: step 4/6. Functionally, involved in the biosynthesis of isopentenyl diphosphate (IPP) and dimethylallyl diphosphate (DMAPP), two major building blocks of isoprenoid compounds. Catalyzes the conversion of 4-diphosphocytidyl-2-C-methyl-D-erythritol 2-phosphate (CDP-ME2P) to 2-C-methyl-D-erythritol 2,4-cyclodiphosphate (ME-CPP) with a corresponding release of cytidine 5-monophosphate (CMP). This is 2-C-methyl-D-erythritol 2,4-cyclodiphosphate synthase from Geotalea daltonii (strain DSM 22248 / JCM 15807 / FRC-32) (Geobacter daltonii).